The sequence spans 457 residues: Phosphomethylpyrimidine synthase (457 aa).

Substrate is bound by residues Asn-80, Met-109, Tyr-139, His-175, 195–197 (SRG), 236–239 (DSLR), and Glu-275. His-279 provides a ligand contact to Zn(2+). Tyr-302 is a binding site for substrate. His-343 is a binding site for Zn(2+). [4Fe-4S] cluster is bound by residues Cys-423, Cys-426, and Cys-431.

It belongs to the ThiC family. It depends on [4Fe-4S] cluster as a cofactor.

It catalyses the reaction 5-amino-1-(5-phospho-beta-D-ribosyl)imidazole + S-adenosyl-L-methionine = 4-amino-2-methyl-5-(phosphooxymethyl)pyrimidine + CO + 5'-deoxyadenosine + formate + L-methionine + 3 H(+). It participates in cofactor biosynthesis; thiamine diphosphate biosynthesis. Its function is as follows. Catalyzes the synthesis of the hydroxymethylpyrimidine phosphate (HMP-P) moiety of thiamine from aminoimidazole ribotide (AIR) in a radical S-adenosyl-L-methionine (SAM)-dependent reaction. The sequence is that of Phosphomethylpyrimidine synthase from Nostoc punctiforme (strain ATCC 29133 / PCC 73102).